We begin with the raw amino-acid sequence, 331 residues long: Peroxidase 49 (331 aa).

Residues 1-22 (MARLTSFLLLLSLICFVPLCLC) form the signal peptide. Disulfide bonds link Cys39–Cys119, Cys72–Cys77, Cys125–Cys326, and Cys204–Cys236. His70 functions as the Proton acceptor in the catalytic mechanism. The Ca(2+) site is built by Asp71, Val74, Gly76, Asp78, and Ser80. Pro167 contacts substrate. The N-linked (GlcNAc...) asparagine glycan is linked to Asn170. Residue His197 coordinates heme b. Thr198 lines the Ca(2+) pocket. Residue Asn213 is glycosylated (N-linked (GlcNAc...) asparagine). 3 residues coordinate Ca(2+): Asp249, Ser252, and Asp257.

This sequence belongs to the peroxidase family. Classical plant (class III) peroxidase subfamily. The cofactor is heme b. Requires Ca(2+) as cofactor.

Its subcellular location is the secreted. It catalyses the reaction 2 a phenolic donor + H2O2 = 2 a phenolic radical donor + 2 H2O. In terms of biological role, removal of H(2)O(2), oxidation of toxic reductants, biosynthesis and degradation of lignin, suberization, auxin catabolism, response to environmental stresses such as wounding, pathogen attack and oxidative stress. These functions might be dependent on each isozyme/isoform in each plant tissue. The sequence is that of Peroxidase 49 (PER49) from Arabidopsis thaliana (Mouse-ear cress).